The sequence spans 223 residues: Serine/threonine/tyrosine-interacting protein B (223 aa).

A Tyrosine-protein phosphatase domain is found at 28–176; it reads EMQEILPGLF…LQEYEAIYLA (149 aa).

It belongs to the protein-tyrosine phosphatase family. Non-receptor class subfamily.

Its function is as follows. Catalytically inactive phosphatase. In Xenopus laevis (African clawed frog), this protein is Serine/threonine/tyrosine-interacting protein B (styx-b).